A 161-amino-acid polypeptide reads, in one-letter code: 2-C-methyl-D-erythritol 2,4-cyclodiphosphate synthase (161 aa).

Positions 10 and 12 each coordinate a divalent metal cation. Residues 10–12 (DVH) and 36–37 (HS) contribute to the 4-CDP-2-C-methyl-D-erythritol 2-phosphate site. Histidine 44 serves as a coordination point for a divalent metal cation. 4-CDP-2-C-methyl-D-erythritol 2-phosphate contacts are provided by residues 58–60 (DIG), 63–67 (FPDTD), 102–108 (AQAPKMA), 134–137 (TTTE), phenylalanine 141, and arginine 144.

The protein belongs to the IspF family. As to quaternary structure, homotrimer. A divalent metal cation serves as cofactor.

It carries out the reaction 4-CDP-2-C-methyl-D-erythritol 2-phosphate = 2-C-methyl-D-erythritol 2,4-cyclic diphosphate + CMP. Its pathway is isoprenoid biosynthesis; isopentenyl diphosphate biosynthesis via DXP pathway; isopentenyl diphosphate from 1-deoxy-D-xylulose 5-phosphate: step 4/6. Involved in the biosynthesis of isopentenyl diphosphate (IPP) and dimethylallyl diphosphate (DMAPP), two major building blocks of isoprenoid compounds. Catalyzes the conversion of 4-diphosphocytidyl-2-C-methyl-D-erythritol 2-phosphate (CDP-ME2P) to 2-C-methyl-D-erythritol 2,4-cyclodiphosphate (ME-CPP) with a corresponding release of cytidine 5-monophosphate (CMP). The protein is 2-C-methyl-D-erythritol 2,4-cyclodiphosphate synthase of Shewanella sediminis (strain HAW-EB3).